We begin with the raw amino-acid sequence, 203 residues long: Early nodulin-like protein 9 (203 aa).

The N-terminal stretch at 1-27 (MARNLKSMMLCGFGLLCFLMIVDRAYA) is a signal peptide. Residues 28 to 130 (REFTVGGATG…NEKLVVIVMA (103 aa)) enclose the Phytocyanin domain. Cys-84 and Cys-118 are joined by a disulfide. Asn-103 carries N-linked (GlcNAc...) asparagine glycosylation. A disordered region spans residues 134–181 (GNKNTASSPPSPAPAPSGESAPSPPVSGTFEMTPAPTPTTSEDTPNSA). The GPI-anchor amidated serine moiety is linked to residue Ser-180. Residues 181-203 (AASSLSFVAALLGAALASTLFLH) constitute a propeptide, removed in mature form.

Belongs to the early nodulin-like (ENODL) family. Specifically observed at the plasma membrane of sieve elements in vascular tissues of leaves, stems, roots, flowers and reproductive organs. Absent from companion cells.

It localises to the cell membrane. Its function is as follows. May act as a carbohydrate transporter. Mainly required for reproductive functions. The protein is Early nodulin-like protein 9 of Arabidopsis thaliana (Mouse-ear cress).